Consider the following 787-residue polypeptide: LPS-assembly protein LptD (787 aa).

An N-terminal signal peptide occupies residues 1–24 (MKKSFPTLLATLVWSALYSQHALA).

This sequence belongs to the LptD family. In terms of assembly, component of the lipopolysaccharide transport and assembly complex. Interacts with LptE and LptA.

The protein localises to the cell outer membrane. Functionally, together with LptE, is involved in the assembly of lipopolysaccharide (LPS) at the surface of the outer membrane. This Pectobacterium atrosepticum (strain SCRI 1043 / ATCC BAA-672) (Erwinia carotovora subsp. atroseptica) protein is LPS-assembly protein LptD.